We begin with the raw amino-acid sequence, 196 residues long: Peroxiredoxin TSA2 (196 aa).

Residues 3-161 enclose the Thioredoxin domain; sequence AEVQKQAPPF…ALRLVEGFQW (159 aa). Lys-14 participates in a covalent cross-link: Glycyl lysine isopeptide (Lys-Gly) (interchain with G-Cter in ubiquitin). Cys-48 (cysteine sulfenic acid (-SOH) intermediate) is an active-site residue. Glycyl lysine isopeptide (Lys-Gly) (interchain with G-Cter in ubiquitin) cross-links involve residues Lys-89 and Lys-132. Thr-174 bears the Phosphothreonine mark.

The protein belongs to the peroxiredoxin family. AhpC/Prx1 subfamily. As to quaternary structure, homodimer; disulfide-linked, upon oxidation.

The protein localises to the cytoplasm. The catalysed reaction is a hydroperoxide + [thioredoxin]-dithiol = an alcohol + [thioredoxin]-disulfide + H2O. Thiol-specific peroxidase that catalyzes the reduction of hydrogen peroxide and organic hydroperoxides to water and alcohols, respectively. Plays a role in cell protection against oxidative stress by detoxifying peroxides and as sensor of hydrogen peroxide-mediated signaling events. Can act alternatively as peroxidase and molecular chaperone. Oxidative stress and heat shock exposure cause a reversible shift of the protein structure from low MW species to high MW complexes, triggering a peroxidase-to-chaperone functional switch. The chaperone function of the protein enhances resistance to heat shock. The sequence is that of Peroxiredoxin TSA2 from Saccharomyces cerevisiae (strain ATCC 204508 / S288c) (Baker's yeast).